Consider the following 629-residue polypeptide: UvrABC system protein C (629 aa).

A GIY-YIG domain is found at 12 to 91 (DRPGCYLFKD…IKKHKPKYNI (80 aa)). Residues 200–235 (QEVLERLRARMEQAAERLEFERAAELRDQIRAIEKV) enclose the UVR domain.

The protein belongs to the UvrC family. As to quaternary structure, interacts with UvrB in an incision complex.

Its subcellular location is the cytoplasm. Functionally, the UvrABC repair system catalyzes the recognition and processing of DNA lesions. UvrC both incises the 5' and 3' sides of the lesion. The N-terminal half is responsible for the 3' incision and the C-terminal half is responsible for the 5' incision. In Symbiobacterium thermophilum (strain DSM 24528 / JCM 14929 / IAM 14863 / T), this protein is UvrABC system protein C.